The primary structure comprises 550 residues: Transcription factor 7-like 1-C (550 aa).

Residues methionine 1 to glutamate 11 show a composition bias toward gly residues. The interval methionine 1 to serine 60 is interaction with CTNNB1-A. 3 disordered regions span residues methionine 1 to arginine 76, glycine 182 to glutamate 206, and tryptophan 390 to threonine 473. Composition is skewed to basic and acidic residues over residues glutamate 17–proline 32 and serine 51–arginine 76. The interval leucine 108–valine 311 is interaction with AES and TLE4-A. The HMG box DNA-binding region spans isoleucine 323–serine 391. The span at lysine 406–threonine 415 shows a compositional bias: basic and acidic residues. An interaction with CTBP-B region spans residues glutamine 407–aspartate 550. Over residues serine 444–serine 463 the composition is skewed to low complexity. A compositionally biased stretch (polar residues) spans glutamate 464 to threonine 473.

The protein belongs to the TCF/LEF family. In terms of assembly, interacts with csnk1e, ctnnb1-A, ctbp-B, dact1-A and gsk3b. May interact with ase and tle4-A. Phosphorylated. Phosphorylation by csnk1e promotes binding to ctnnb1-A while phosphorylation by gsk3b may reverse this effect.

It is found in the nucleus. Its function is as follows. Participates in the Wnt signaling pathway. Binds to DNA and acts as a repressor in the absence of ctnnb1-A and possibly ctnnb1-B, and as an activator in the presence of these proteins. Required early in development for the establishment of the dorsal body axis in response to maternal Wnt signaling. This chain is Transcription factor 7-like 1-C (tcf7l1-c), found in Xenopus laevis (African clawed frog).